A 163-amino-acid chain; its full sequence is uncharacterized protein (163 aa).

The disordered stretch occupies residues 30-163 (GNENTSVSSD…IYKKLGKKKR (134 aa)). Over residues 88 to 118 (ERQLQKKKEAEKIEGGKNHDNLKRKLNKVGD) the composition is skewed to basic and acidic residues. Residues 119 to 133 (ELNEQQSDTDDDDDD) show a composition bias toward acidic residues. At Ser125 the chain carries Phosphoserine. Thr127 is subject to Phosphothreonine.

The protein resides in the nucleus. It is found in the nucleolus. This is an uncharacterized protein from Schizosaccharomyces pombe (strain 972 / ATCC 24843) (Fission yeast).